We begin with the raw amino-acid sequence, 713 residues long: Forkhead box protein P2 (713 aa).

Residues methionine 1–aspartate 28 are compositionally biased toward polar residues. 2 disordered regions span residues methionine 1–serine 45 and aspartate 279–serine 337. Residues threonine 290–serine 303 are compositionally biased toward low complexity. The segment covering serine 313–leucine 322 has biased composition (polar residues). The span at alanine 324–glycine 335 shows a compositional bias: basic and acidic residues. The segment at glycine 344–histidine 369 adopts a C2H2-type zinc-finger fold. Residues valine 386 to leucine 407 are leucine-zipper. The segment at proline 420 to valine 424 is CTBP1-binding. Low complexity predominate over residues threonine 436–glutamine 457. Residues threonine 436–threonine 463 form a disordered region. A DNA-binding region (fork-head) is located at residues arginine 502 to leucine 592. 2 disordered regions span residues leucine 647–isoleucine 666 and valine 676–glutamate 713. The segment covering leucine 697–glutamate 713 has biased composition (acidic residues).

In terms of assembly, forms homodimers and heterodimers with FOXP1 and FOXP4. Dimerization is required for DNA-binding. Interacts with CTBP1. Interacts with FOXP1. Interacts with TBR1. Interacts with ZMYM2.

It is found in the nucleus. Its function is as follows. Transcriptional repressor that may play a role in the specification and differentiation of lung epithelium. May also play a role in developing neural, gastrointestinal and cardiovascular tissues. Can act with CTBP1 to synergistically repress transcription but CTPBP1 is not essential. Plays a role in synapse formation by regulating SRPX2 levels. In Hylobates lar (Lar gibbon), this protein is Forkhead box protein P2 (FOXP2).